Consider the following 280-residue polypeptide: Protein lyl-1 (280 aa).

A disordered region spans residues 1–60 (MCPPQAQAEVGPTMTEKAEMVCAPSPAPAPPPKPASPGPPQVEEVGHRGGSSPPRLPPGV). A compositionally biased stretch (pro residues) spans 25–40 (SPAPAPPPKPASPGPP). In terms of domain architecture, bHLH spans 150 to 202 (ARRVFTNSRERWRQQNVNGAFAELRKLLPTHPPDRKLSKNEVLRLAMKYIGFL). The segment at 214–280 (AAGPTPPGPR…EQTALSPEVR (67 aa)) is disordered. Positions 229 to 245 (RVPDDGARRGSGRRAEA) are enriched in basic and acidic residues. Residues 257–267 (PDGSPGGAARP) show a composition bias toward low complexity. Phosphoserine occurs at positions 260 and 276.

As to quaternary structure, efficient DNA binding requires dimerization with another bHLH protein.

It localises to the nucleus. The sequence is that of Protein lyl-1 (LYL1) from Homo sapiens (Human).